The primary structure comprises 80 residues: Small pacifastin protease inhibitor (80 aa).

Positions 1 to 24 are cleaved as a signal peptide; the sequence is MSKVLKVGLLLLLVAVAASAYAVA. Residues 25–47 constitute a propeptide that is removed on maturation; that stretch reads EENGAPKENKQLPQIDDYGVTNK. Residues 45-80 form the Pacifastin domain; sequence TNKCPANQPFKWNCNYCTCGPEGKDASCTRMACPQH. 3 cysteine pairs are disulfide-bonded: C48–C63, C58–C77, and C61–C72.

The protein belongs to the protease inhibitor I19 family. As to expression, expressed in the venom apparatus. Low transcript levels are also detected in other tissues.

The protein localises to the secreted. Functionally, parasitic wasp protein that may interfere with the host immune response. The recombinant protein inhibits trypsin activity and prophenoloxidase (PPO) activation, an enzyme essential for both clotting and insect innate immune responses. It does not inhibit activity of chymotrypsin and protease K, and has no effect on phenoloxidase (PO) activity. The polypeptide is Small pacifastin protease inhibitor (Nasonia vitripennis (Parasitic wasp)).